The chain runs to 732 residues: MHKIPCFVLIYEQFDIIKKCLTFLTKYAHRLHIVIIENYSVNTNQQIKPYVMDLLEKGIICKYYLFEENIANNAVHIVLEEAIAKYLDPTVFPYVFVTDGDLTIEDTNWIDEHVNIMDKHKNVFICGCSLDNSNLPTKTMPNAVHWIKPGIDQGDYIKGITGTTFTLHRTNELIEAIKFFNSKGWRYLDSNLHKFCFDAKRMIWARTKKAKCYHLTWDLYLDLTHPYTIMKLKNVNTMWKRSQSSKFQLYENSSDLRLDIYQELNDTKETIIVRKLKVISSGFDLGLDQSGIEYNGIFYPASRGFTVYTITDETVSVSNFDTHINSCTVNLARHIRESYRSGCHYIISVVHDDGFKKLSKNQLKEVGGLLSLDKIFYLYIRFSYYFVYDNIHKSLIDEDVSKVSFLSKEFSDLKFSKLISNNQITPSSTISNSNSQDLNIPDSTIIPLLSNNNGPITKQYHIVCLKWMLMFYREYIESFGSLLNIDYILLDNFNNYNYINSPEHVYIFCQLTDDSLLTKPFQKMILNTEQLTIAKYMDRTRKYINHGIQIIDYSIENIKLCNNPSTIYLPYQYSDSEIQILKKLYDSTPKKYDLVFCGSISQRRRYILDSLKSHGVSILELVTGHWGHPRDVEMASCKMLINIHYAHDYNIYESMRCDRWAFATMPVVSEDSIHYGLLDVKKHGLITFCEYDQLILKTLEALKNFKKTNENIINTVKKEREHQLIKVFTELK.

Belongs to the mimivirus L137 family.

This is an uncharacterized protein from Acanthamoeba polyphaga mimivirus (APMV).